The chain runs to 353 residues: Vomeronasal type-1 receptor 1 (353 aa).

Residues 1–56 (MVGDTLKLLSPLMTRYFFLLFYSTDSSDLNENQHPLDFDEMAFGKVKSGISFLIQT) lie on the Extracellular side of the membrane. The chain crosses the membrane as a helical span at residues 57-77 (GVGILGNSFLLCFYNLILFTG). Residues 78-84 (HKLRPTD) lie on the Cytoplasmic side of the membrane. The helical transmembrane segment at 85-105 (LILSQLALANSMVLFFKGIPQ) threads the bilayer. Over 106-132 (TMAAFGLKYLLNDTGCKFVFYYHRVGT) the chain is Extracellular. N117 is a glycosylation site (N-linked (GlcNAc...) asparagine). A helical membrane pass occupies residues 133-153 (RVSLSTICLLNGFQAIKLNPS). Residues 154–169 (ICRWMEIKIRSPRFID) lie on the Cytoplasmic side of the membrane. A helical transmembrane segment spans residues 170–190 (FCCLLCWAPHVLMNASVLLLV). Residues 191–226 (NGPLNSKNSSAKNNYGYCSYKASKRFSSLHAVLYFS) lie on the Extracellular side of the membrane. N-linked (GlcNAc...) asparagine glycosylation is present at N198. A helical transmembrane segment spans residues 227 to 247 (PDFMSLGFMVWASGSMVFFLY). Residues 248 to 274 (RHKQQVQHNHSNRLSCRPSQEARATHT) lie on the Cytoplasmic side of the membrane. Residues 275 to 295 (IMVLVSSFFVFYSVHSFLTIW) form a helical membrane-spanning segment. The Extracellular segment spans residues 296–303 (TTVVANPG). Residues 304-324 (QWIVTNSVLVASCFPARSPFV) form a helical membrane-spanning segment. At 325 to 353 (LIMSDTHISQFCFACRTRKTLFPNLVVMP) the chain is on the cytoplasmic side.

Belongs to the G-protein coupled receptor 1 family. In terms of tissue distribution, expressed in the olfactory mucosa, very low expression in brain, lung and kidney.

Its subcellular location is the cell membrane. In terms of biological role, putative pheromone receptor. This is Vomeronasal type-1 receptor 1 (VN1R1) from Homo sapiens (Human).